The chain runs to 490 residues: Subtilisin-like protease 8 (490 aa).

Positions Met-1–Gln-26 are cleaved as a signal peptide. Positions Asp-27–Ala-134 are excised as a propeptide. Residues Ser-43 to Arg-133 form the Inhibitor I9 domain. The Peptidase S8 domain occupies Pro-144–Val-450. Active-site charge relay system residues include Asp-180 and His-212. Residue Asn-282 is glycosylated (N-linked (GlcNAc...) asparagine). Ser-378 acts as the Charge relay system in catalysis. Asn-455 carries N-linked (GlcNAc...) asparagine glycosylation.

This sequence belongs to the peptidase S8 family.

It localises to the secreted. Functionally, secreted subtilisin-like serine protease with keratinolytic activity that contributes to pathogenicity. This is Subtilisin-like protease 8 (SUB8) from Arthroderma otae (strain ATCC MYA-4605 / CBS 113480) (Microsporum canis).